The following is a 274-amino-acid chain: Probable S-adenosylmethionine-dependent methyltransferase MT3114 (274 aa).

Residues 1-24 form a disordered region; it reads MCAFVPHVPRHSRGDNPPSASTAS.

The protein belongs to the methyltransferase superfamily.

Probable S-adenosylmethionine-dependent methyltransferase required for the 6-O-methylation of the polysaccharide backbone of 6-O-methylglucosyl lipopolysaccharides (MGLP). This chain is Probable S-adenosylmethionine-dependent methyltransferase MT3114, found in Mycobacterium tuberculosis (strain CDC 1551 / Oshkosh).